The chain runs to 267 residues: Glutamate racemase (267 aa).

Residues 9 to 10 (DS) and 41 to 42 (YS) contribute to the substrate site. Cys-73 acts as the Proton donor/acceptor in catalysis. Position 74-75 (74-75 (NT)) interacts with substrate. Residue Cys-184 is the Proton donor/acceptor of the active site. 185 to 186 (TH) serves as a coordination point for substrate.

This sequence belongs to the aspartate/glutamate racemases family.

The enzyme catalyses L-glutamate = D-glutamate. It participates in cell wall biogenesis; peptidoglycan biosynthesis. Functionally, provides the (R)-glutamate required for cell wall biosynthesis. This chain is Glutamate racemase, found in Actinobacillus pleuropneumoniae serotype 7 (strain AP76).